The chain runs to 306 residues: 2-phospho-L-lactate transferase (306 aa).

D48 is a 7,8-didemethyl-8-hydroxy-5-deazariboflavin binding site.

This sequence belongs to the CofD family. As to quaternary structure, homodimer. The cofactor is Mg(2+).

It catalyses the reaction (2S)-lactyl-2-diphospho-5'-guanosine + 7,8-didemethyl-8-hydroxy-5-deazariboflavin = oxidized coenzyme F420-0 + GMP + H(+). The protein operates within cofactor biosynthesis; coenzyme F420 biosynthesis. Its function is as follows. Catalyzes the transfer of the 2-phospholactate moiety from (2S)-lactyl-2-diphospho-5'-guanosine to 7,8-didemethyl-8-hydroxy-5-deazariboflavin (FO) with the formation of oxidized coenzyme F420-0 and GMP. The sequence is that of 2-phospho-L-lactate transferase from Methanococcoides burtonii (strain DSM 6242 / NBRC 107633 / OCM 468 / ACE-M).